The sequence spans 887 residues: MAADDTEAPVLSEDEVWEFCLDKNEEGGGSPGSDVTDTCEPPCGCWELNPSSLEEEHVLFTAESIISSFNNDDTRVVRVKVIAGIGLAKKDILGASDPYVRVTLYDPMSGVLTSVQTKTIKKSLNPKWNEEILFRVLPQQHRILFEVFDENRLTRDDFLGQVDVPLYPLPTENPRMERPYTFKDFVLHPRSHKSRVKGYLRLKMTYLPKNGSDDENADQAEELEPGWVVLDQPDAATHLQHPPEPSPLPPGWEERQDVLGRTYYVNHESRTTQWKRPSPEDDLTDDENGDIQLQAHGAFTTRRQISEDVDGPDNHESPENWEIVREDENTIYSGQAVQSPPSGHPDVQVRLAEELDTRLTMYGNPATSQPVTSSNHSSRGGSSQTCIFEEQPTLPVLLPTSSGLPPGWEEKQDDRGRSYYVDHNSKTTTWSKPTMQDDPRSKIPAHLRGKTPVDSNDLGPLPPGWEERTHTDGRVFFINHNIKKTQWEDPRMQNVAITGPAEPYSRDYKRKYEFFRRKLKKQTDIPNKFEMKLRRANILEDSYRRIMGVKRADFLKARLWIEFDGEKGLDYGGVAREWFFLISKEMFNPYYGLFEYSATEDNYTLQINPNSGLCNEDHLSYFKFIGRVAGMAVYHGKLLDGFFIRPFYKMMLQKLITLHDMESVDSEYYSSLRWILENDPTELDLRFIIDEELFGQTHQHELKTGGSEVVVTNKNKKEYIYLVIQWRFVNRIQKQMAAFKEGFFELIPQDLIKIFDENELELLMCGLGDVDVNDWREHTKYKNGYSLNHQVIHWFWKAVLMMDSEKRIRLLQFVTGTSRVPMNGFAELYGSNGPQSFTVEQWGTPDKLPRAHTCFNRLDLPPYESFDELWDKLQMAIENTQGFDGVD.

One can recognise a C2 domain in the interval 54–180 (EEEHVLFTAE…TENPRMERPY (127 aa)). Residue Ser212 is modified to Phosphoserine. Residues 214–548 (DENADQAEEL…LEDSYRRIMG (335 aa)) form a mediates interaction with TNIK region. A WW 1 domain is found at 246–279 (SPLPPGWEERQDVLGRTYYVNHESRTTQWKRPSP). Thr284 carries the post-translational modification Phosphothreonine. The segment at 297 to 319 (GAFTTRRQISEDVDGPDNHESPE) is disordered. Phosphoserine is present on Ser306. Residues 351–361 (LAEELDTRLTM) carry the Nuclear export signal motif. 2 disordered regions span residues 362–384 (YGNPATSQPVTSSNHSSRGGSSQ) and 396–440 (VLLP…DDPR). Low complexity predominate over residues 373–383 (SSNHSSRGGSS). 2 positions are modified to phosphoserine: Ser377 and Ser382. 2 WW domains span residues 402 to 435 (SGLPPGWEEKQDDRGRSYYVDHNSKTTTWSKPTM) and 459 to 492 (GPLPPGWEERTHTDGRVFFINHNIKKTQWEDPRM). Residues 408 to 417 (WEEKQDDRGR) are compositionally biased toward basic and acidic residues. One can recognise an HECT domain in the interval 551 to 887 (RADFLKARLW…ENTQGFDGVD (337 aa)). A Glycyl lysine isopeptide (Lys-Gly) (interchain with G-Cter in ubiquitin) cross-link involves residue Lys847. Cys854 serves as the catalytic Glycyl thioester intermediate.

Interacts with UBE2D2. Binds, in vitro, through the WW2 and WW3 domains, to neural isoforms of ENAH that contain the PPSY motif. Interacts with BEAN1, LITAF, RNF11, WBP1, WBP2, PMEPAI, NDFIP1, and PRRG2. Interacts (via C2 domain) with GRB10 (via SH2 domain). Interacts SCNN1A, SCNN1B and SCNN1G; regulates the activity of the epithelial Na(+) channel (ENaC) through ubiquitination, degradation and intracellular retention. Interacts with ERBB4. Interacts with NDFIP1 and NDFIP2; this interaction activates the E3 ubiquitin-protein ligase and may induce its recruitment to exosomes. Interacts with TNIK; the interaction is direct, allows the TNIK-dependent recruitment of RAP2A and its ubiquitination by NEDD4. Interacts (via WW3 domain) with TNK2; EGF promotes this interaction. Interacts (via WW3 domain) with FGFR1 (via C-terminus). Interacts with OTUD7B. Interacts with ISG15. Interacts (via WW domain) with RAPGEF2; this interaction leads to ubiquitination and degradation via the proteasome pathway. Interacts (via WW domains) with ARRDC3 (via PPXY motifs). Interacts with LAPTM4B; may play a role in the lysosomal sorting of LAPTM4B. Interacts with ZBTB7B. Interacts with PRRG4 (via cytoplasmic domain). Interacts directly with LDLRAD3; this interaction promotes NEDD4 auto-ubiquitination. Interacts with ADRB2. Interacts (via WW domains) with DAZAP2 (via PPAY motif). In terms of processing, undergoes 'Lys-29'-linked auto-ubiquitination at Lys-847 and serves as a scaffold for recruiting USP13 to form an NEDD4-USP13 deubiquitination complex. In terms of tissue distribution, ubiquitously expressed. Expression is highest in lung, kidney and brain.

Its subcellular location is the cytoplasm. The protein localises to the nucleus. The protein resides in the cell membrane. The enzyme catalyses S-ubiquitinyl-[E2 ubiquitin-conjugating enzyme]-L-cysteine + [acceptor protein]-L-lysine = [E2 ubiquitin-conjugating enzyme]-L-cysteine + N(6)-ubiquitinyl-[acceptor protein]-L-lysine.. The protein operates within protein modification; protein ubiquitination. With respect to regulation, activated by NDFIP1- and NDFIP2-binding. Its function is as follows. E3 ubiquitin-protein ligase which accepts ubiquitin from an E2 ubiquitin-conjugating enzyme in the form of a thioester and then directly transfers the ubiquitin to targeted substrates. Specifically ubiquitinates 'Lys-63' in target proteins. Monoubiquitinates IGF1R at multiple sites, thus leading to receptor internalization and degradation in lysosomes. Ubiquitinates FGFR1, leading to receptor internalization and degradation in lysosomes. Promotes ubiquitination of RAPGEF2. Involved in the pathway leading to the degradation of VEGFR-2/KDFR, independently of its ubiquitin-ligase activity. Is involved in ubiquitination of ERBB4 intracellular domain E4ICD. Part of a signaling complex composed of NEDD4, RAP2A and TNIK which regulates neuronal dendrite extension and arborization during development. Ubiquitinates TNK2 and regulates EGF-induced degradation of EGFR and TNF2. Ubiquitinates BRAT1 and this ubiquitination is enhanced in the presence of NDFIP1. Ubiquitinates DAZAP2, leading to its proteasomal degradation. Ubiquitinates POLR2A. Functions as a platform to recruit USP13 to form an NEDD4-USP13 deubiquitination complex that plays a critical role in cleaving the 'Lys-48'-linked ubiquitin chains of VPS34 and then stabilizing VPS34, thus promoting the formation of autophagosomes. This Rattus norvegicus (Rat) protein is E3 ubiquitin-protein ligase NEDD4 (Nedd4).